The following is a 257-amino-acid chain: LexA repressor (257 aa).

The segment at residues 64 to 84 (FREIGEAAGLKSPSSVKHQLQ) is a DNA-binding region (H-T-H motif). Catalysis depends on for autocatalytic cleavage activity residues Ser-181 and Lys-218.

This sequence belongs to the peptidase S24 family. Homodimer.

The catalysed reaction is Hydrolysis of Ala-|-Gly bond in repressor LexA.. In terms of biological role, represses a number of genes involved in the response to DNA damage (SOS response), including recA and lexA. In the presence of single-stranded DNA, RecA interacts with LexA causing an autocatalytic cleavage which disrupts the DNA-binding part of LexA, leading to derepression of the SOS regulon and eventually DNA repair. In Bifidobacterium adolescentis (strain ATCC 15703 / DSM 20083 / NCTC 11814 / E194a), this protein is LexA repressor.